Reading from the N-terminus, the 563-residue chain is Germacrene-A synthase (563 aa).

The Mg(2+) site is built by Asp-316, Asp-320, Asp-461, and Glu-469. Residues 316–320 (DDIYD) carry the DDXXD motif motif.

This sequence belongs to the terpene synthase family. Tpsa subfamily. Mg(2+) is required as a cofactor. In terms of tissue distribution, expressed in young leaves. Detected in trichomes and cones.

It catalyses the reaction (2E,6E)-farnesyl diphosphate = (+)-(R)-germacrene A + diphosphate. Its pathway is secondary metabolite biosynthesis; terpenoid biosynthesis. Its function is as follows. Sesquiterpene synthase that catalyzes the formation of germacrene A. Can use farnesyl diphosphate as substrate, but not geranyl diphosphate or geranylgeranyl diphosphate. Beta-elemene, the initially measured product in the assay, is derived nonenzymatically from germacrene A. This chain is Germacrene-A synthase, found in Humulus lupulus (European hop).